The following is a 293-amino-acid chain: ATP synthase subunit a (293 aa).

Helical transmembrane passes span Asp-40 to Ala-60, Phe-98 to Leu-118, Asp-151 to Ile-171, Phe-188 to Ile-208, Met-225 to Phe-245, and Ala-264 to Val-284.

The protein belongs to the ATPase A chain family. As to quaternary structure, F-type ATPases have 2 components, CF(1) - the catalytic core - and CF(0) - the membrane proton channel. CF(1) has five subunits: alpha(3), beta(3), gamma(1), delta(1), epsilon(1). CF(0) has three main subunits: a(1), b(2) and c(9-12). The alpha and beta chains form an alternating ring which encloses part of the gamma chain. CF(1) is attached to CF(0) by a central stalk formed by the gamma and epsilon chains, while a peripheral stalk is formed by the delta and b chains.

Its subcellular location is the cell inner membrane. In terms of biological role, key component of the proton channel; it plays a direct role in the translocation of protons across the membrane. This Bordetella avium (strain 197N) protein is ATP synthase subunit a.